A 490-amino-acid polypeptide reads, in one-letter code: Cardiolipin synthase A (490 aa).

Transmembrane regions (helical) follow at residues 20-40 (LGLL…HAVL) and 49-69 (IAWA…YLVF). 2 PLD phosphodiesterase domains span residues 229–256 (VNFR…GVEY) and 403–430 (QPGF…DNRS). Catalysis depends on residues His234, Lys236, Asp241, His408, Lys410, and Asp415.

It belongs to the phospholipase D family. Cardiolipin synthase subfamily. ClsA sub-subfamily.

It localises to the cell inner membrane. The catalysed reaction is 2 a 1,2-diacyl-sn-glycero-3-phospho-(1'-sn-glycerol) = a cardiolipin + glycerol. Functionally, catalyzes the reversible phosphatidyl group transfer from one phosphatidylglycerol molecule to another to form cardiolipin (CL) (diphosphatidylglycerol) and glycerol. In Pseudomonas aeruginosa (strain LESB58), this protein is Cardiolipin synthase A.